The sequence spans 455 residues: Ribosomal protein uS12 methylthiotransferase RimO (455 aa).

Residues 30 to 140 enclose the MTTase N-terminal domain; the sequence is PTIGMVSLGC…VLDAVHGAVP (111 aa). [4Fe-4S] cluster is bound by residues Cys39, Cys75, Cys104, Cys171, Cys175, and Cys178. The Radical SAM core domain maps to 157 to 386; sequence LTPRHFSYLK…MEKAQAISEV (230 aa). In terms of domain architecture, TRAM spans 389 to 455; that stretch reads AAKVGRRIEV…GEYDIWGRPV (67 aa).

It belongs to the methylthiotransferase family. RimO subfamily. [4Fe-4S] cluster is required as a cofactor.

It is found in the cytoplasm. It carries out the reaction L-aspartate(89)-[ribosomal protein uS12]-hydrogen + (sulfur carrier)-SH + AH2 + 2 S-adenosyl-L-methionine = 3-methylsulfanyl-L-aspartate(89)-[ribosomal protein uS12]-hydrogen + (sulfur carrier)-H + 5'-deoxyadenosine + L-methionine + A + S-adenosyl-L-homocysteine + 2 H(+). In terms of biological role, catalyzes the methylthiolation of an aspartic acid residue of ribosomal protein uS12. The chain is Ribosomal protein uS12 methylthiotransferase RimO from Cereibacter sphaeroides (strain ATCC 17023 / DSM 158 / JCM 6121 / CCUG 31486 / LMG 2827 / NBRC 12203 / NCIMB 8253 / ATH 2.4.1.) (Rhodobacter sphaeroides).